Reading from the N-terminus, the 77-residue chain is Small ribosomal subunit protein uS17c (77 aa).

Belongs to the universal ribosomal protein uS17 family. As to quaternary structure, part of the 30S ribosomal subunit.

Its subcellular location is the plastid. It localises to the chloroplast. In terms of biological role, one of the primary rRNA binding proteins, it binds specifically to the 5'-end of 16S ribosomal RNA. The polypeptide is Small ribosomal subunit protein uS17c (rps17) (Cyanidium caldarium (Red alga)).